We begin with the raw amino-acid sequence, 121 residues long: MAFDKDAIIASLKDATILDLADLVSAIEEEFNVSAAAPVAAAGGADGAAAAKTDFDVELTSAGTAKVKVIKAVREATGLGLKEAKDLVDNAPSIVKEGLDEAAANDLKAALEETGASVTLK.

It belongs to the bacterial ribosomal protein bL12 family. In terms of assembly, homodimer. Part of the ribosomal stalk of the 50S ribosomal subunit. Forms a multimeric L10(L12)X complex, where L10 forms an elongated spine to which 2 to 4 L12 dimers bind in a sequential fashion. Binds GTP-bound translation factors.

Functionally, forms part of the ribosomal stalk which helps the ribosome interact with GTP-bound translation factors. Is thus essential for accurate translation. This chain is Large ribosomal subunit protein bL12, found in Leuconostoc citreum (strain KM20).